Consider the following 384-residue polypeptide: Autophagy-related protein 25 (384 aa).

2 coiled-coil regions span residues 132-236 (KETA…RRAS) and 342-379 (KKNN…QWKT). Residues 224-247 (ESRLSNMNKRRASPRDDAEAEPKR) form a disordered region. The segment covering 236-247 (SPRDDAEAEPKR) has biased composition (basic and acidic residues).

The protein belongs to the ADIP family.

It is found in the preautophagosomal structure membrane. Functionally, specifically required for selective degradation of peroxisomes via macropexophagy. In Pichia angusta (Yeast), this protein is Autophagy-related protein 25 (ATG25).